A 112-amino-acid polypeptide reads, in one-letter code: Large ribosomal subunit protein P1 (112 aa).

A disordered region spans residues 80-112 (AAAAPAAESKKEEKKKEEESDQSDDDMGFGLFD). A compositionally biased stretch (basic and acidic residues) spans 87–97 (ESKKEEKKKEE). Ser-99 and Ser-102 each carry phosphoserine.

This sequence belongs to the eukaryotic ribosomal protein P1/P2 family. In terms of assembly, P1 and P2 exist as dimers at the large ribosomal subunit.

Its function is as follows. Plays an important role in the elongation step of protein synthesis. This chain is Large ribosomal subunit protein P1 (RpLP1), found in Drosophila melanogaster (Fruit fly).